The sequence spans 511 residues: MEKFEGYSEKHKSRQQYFVYPLLFQEYIYAFAHDYGLNDSEPVEIVSYNNKKFSSLLVKRLIIRMYQQNFGINSVNHPNQDRLLDYKIGFYSEFYSQILSEGFAIVVEIPFSLRELPCPKQKEIPKFQNLRSIHSIFPFLEDKFLHLDYLSHIEIPYPIHLEILVQLLQYRIQDVPSLHLLRFFLNYYSNWNSFITSMKSFFLFKKENKRLFRFLYNSYVSEYEFFLLFLRKQSSCLPLASSGTFLERIHFSRKMEHFGIMYPGFFRKTLWFFMDPLMHYARYQGKAIFASKGTLFFNKKWKWYLIHLWQYFFSFWTQPRRIHLNQLANSCFDFMGYLSSVPKSPLLVRNQMLENSFLIDTRMQKLDTIVPVTALIGYLSKAQFCTGSGHPISKPIWTDLSDWDILDRFGRICRNLFHYHSGSSKKQTLYRLKYILRLSCARTLARKHKSTVRTFMQRLGSAFLEEFFTEEELVFSLMFTKTTLFSFRGSHSERIWYFDIIRINDLVKPLN.

This sequence belongs to the intron maturase 2 family. MatK subfamily.

It is found in the plastid. Its subcellular location is the chloroplast. Its function is as follows. Usually encoded in the trnK tRNA gene intron. Probably assists in splicing its own and other chloroplast group II introns. In Phleum pratense (Common timothy), this protein is Maturase K.